The following is a 529-amino-acid chain: Bifunctional purine biosynthesis protein PurH (529 aa).

An MGS-like domain is found at 1-148; that stretch reads MNNVRPIRRA…KNHKDTTIVV (148 aa).

This sequence belongs to the PurH family.

It catalyses the reaction (6R)-10-formyltetrahydrofolate + 5-amino-1-(5-phospho-beta-D-ribosyl)imidazole-4-carboxamide = 5-formamido-1-(5-phospho-D-ribosyl)imidazole-4-carboxamide + (6S)-5,6,7,8-tetrahydrofolate. The catalysed reaction is IMP + H2O = 5-formamido-1-(5-phospho-D-ribosyl)imidazole-4-carboxamide. The protein operates within purine metabolism; IMP biosynthesis via de novo pathway; 5-formamido-1-(5-phospho-D-ribosyl)imidazole-4-carboxamide from 5-amino-1-(5-phospho-D-ribosyl)imidazole-4-carboxamide (10-formyl THF route): step 1/1. It functions in the pathway purine metabolism; IMP biosynthesis via de novo pathway; IMP from 5-formamido-1-(5-phospho-D-ribosyl)imidazole-4-carboxamide: step 1/1. The sequence is that of Bifunctional purine biosynthesis protein PurH from Shewanella frigidimarina (strain NCIMB 400).